Here is a 124-residue protein sequence, read N- to C-terminus: Sulfur globule protein CV2 (124 aa).

The N-terminal stretch at 1-22 (MKKLATAAAVAALLGASASASA) is a signal peptide.

As to quaternary structure, the protein envelope of the sulfur globules is composed of the three different proteins CV1, CV2 and CV3.

Functionally, structural protein of the sulfur globules, which are intracellular globules that serve for sulfur storage in purple sulfur bacteria. The protein is Sulfur globule protein CV2 (sgpB) of Allochromatium vinosum (strain ATCC 17899 / DSM 180 / NBRC 103801 / NCIMB 10441 / D) (Chromatium vinosum).